A 198-amino-acid chain; its full sequence is Recombination protein RecR (198 aa).

Residues 57-72 (CSICGNLTESDPCAIC) form a C4-type zinc finger. A Toprim domain is found at 80 to 175 (TTILVVEESK…KVTRLAHGLA (96 aa)).

The protein belongs to the RecR family.

In terms of biological role, may play a role in DNA repair. It seems to be involved in an RecBC-independent recombinational process of DNA repair. It may act with RecF and RecO. The protein is Recombination protein RecR of Lactococcus lactis subsp. cremoris (strain SK11).